A 234-amino-acid chain; its full sequence is Proteasome subunit alpha type-2 (234 aa).

The residue at position 2 (Ala2) is an N-acetylalanine. At Tyr121 the chain carries Phosphotyrosine.

This sequence belongs to the peptidase T1A family. The 26S proteasome consists of a 20S proteasome core and two 19S regulatory subunits. The 20S proteasome core is a barrel-shaped complex made of 28 subunits that are arranged in four stacked rings. The two outer rings are each formed by seven alpha subunits, and the two inner rings are formed by seven beta subunits. The proteolytic activity is exerted by three beta-subunits PSMB5, PSMB6 and PSMB7.

It localises to the cytoplasm. It is found in the nucleus. Component of the 20S core proteasome complex involved in the proteolytic degradation of most intracellular proteins. This complex plays numerous essential roles within the cell by associating with different regulatory particles. Associated with two 19S regulatory particles, forms the 26S proteasome and thus participates in the ATP-dependent degradation of ubiquitinated proteins. The 26S proteasome plays a key role in the maintenance of protein homeostasis by removing misfolded or damaged proteins that could impair cellular functions, and by removing proteins whose functions are no longer required. Associated with the PA200 or PA28, the 20S proteasome mediates ubiquitin-independent protein degradation. This type of proteolysis is required in several pathways including spermatogenesis (20S-PA200 complex) or generation of a subset of MHC class I-presented antigenic peptides (20S-PA28 complex). In Xenopus laevis (African clawed frog), this protein is Proteasome subunit alpha type-2 (psma2).